The following is a 121-amino-acid chain: Phosphoribosyl-AMP cyclohydrolase (121 aa).

Aspartate 76 serves as a coordination point for Mg(2+). Cysteine 77 serves as a coordination point for Zn(2+). Residues aspartate 78 and aspartate 80 each coordinate Mg(2+). Zn(2+) contacts are provided by cysteine 93 and cysteine 100.

Belongs to the PRA-CH family. Homodimer. The cofactor is Mg(2+). It depends on Zn(2+) as a cofactor.

The protein localises to the cytoplasm. It catalyses the reaction 1-(5-phospho-beta-D-ribosyl)-5'-AMP + H2O = 1-(5-phospho-beta-D-ribosyl)-5-[(5-phospho-beta-D-ribosylamino)methylideneamino]imidazole-4-carboxamide. It functions in the pathway amino-acid biosynthesis; L-histidine biosynthesis; L-histidine from 5-phospho-alpha-D-ribose 1-diphosphate: step 3/9. In terms of biological role, catalyzes the hydrolysis of the adenine ring of phosphoribosyl-AMP. This chain is Phosphoribosyl-AMP cyclohydrolase, found in Paracoccus denitrificans (strain Pd 1222).